Here is a 275-residue protein sequence, read N- to C-terminus: MPELPEVETVRRGLKALVLGQEIVAVTLKVPKMVKTDLETFALTLPGQIIQSVGRRGKYLLIDLGQLVLVSHLRMEGKYLLFPDEVPDNKHFHVFFELKNGSTLVYQDVRKFGTFDLIAKSQLSAFFAKRKLGPEPKKETFKLKTFEAVLLSSKKTIKPHLLDQTLVAGLGNIYVDEVLWAAKVHPETASSRLNKAEIKRLHDETIRILALGIEKGGSTVRTYRNTLGADGTMQDYLQVYGQTGKPCPRCGQAIVKLKVGGRGTHICPKCQKKRP.

The Schiff-base intermediate with DNA role is filled by Pro-2. Glu-3 acts as the Proton donor in catalysis. Catalysis depends on Lys-58, which acts as the Proton donor; for beta-elimination activity. DNA contacts are provided by His-91 and Arg-110. An FPG-type zinc finger spans residues 238 to 272; the sequence is QVYGQTGKPCPRCGQAIVKLKVGGRGTHICPKCQK. Arg-262 (proton donor; for delta-elimination activity) is an active-site residue.

The protein belongs to the FPG family. As to quaternary structure, monomer. It depends on Zn(2+) as a cofactor.

The catalysed reaction is Hydrolysis of DNA containing ring-opened 7-methylguanine residues, releasing 2,6-diamino-4-hydroxy-5-(N-methyl)formamidopyrimidine.. It carries out the reaction 2'-deoxyribonucleotide-(2'-deoxyribose 5'-phosphate)-2'-deoxyribonucleotide-DNA = a 3'-end 2'-deoxyribonucleotide-(2,3-dehydro-2,3-deoxyribose 5'-phosphate)-DNA + a 5'-end 5'-phospho-2'-deoxyribonucleoside-DNA + H(+). In terms of biological role, involved in base excision repair of DNA damaged by oxidation or by mutagenic agents. Acts as a DNA glycosylase that recognizes and removes damaged bases. Has a preference for oxidized purines, such as 7,8-dihydro-8-oxoguanine (8-oxoG). Has AP (apurinic/apyrimidinic) lyase activity and introduces nicks in the DNA strand. Cleaves the DNA backbone by beta-delta elimination to generate a single-strand break at the site of the removed base with both 3'- and 5'-phosphates. This is Formamidopyrimidine-DNA glycosylase from Streptococcus pyogenes serotype M6 (strain ATCC BAA-946 / MGAS10394).